Here is a 667-residue protein sequence, read N- to C-terminus: Protein MAIN-LIKE 2 (667 aa).

M1 bears the N-acetylmethionine mark. A compositionally biased stretch (basic residues) spans 492–508 (MRGKERVRRKGMGKRRK). 2 disordered regions span residues 492-523 (MRGK…EDES) and 594-667 (KLQE…TVVA). Residues 512–523 (PMEDYGGSEDES) show a composition bias toward acidic residues. Basic and acidic residues-rich tracts occupy residues 608-618 (YDVKKEDKESK) and 656-667 (SLDRRGENTVVA).

In terms of tissue distribution, expressed in root tips, the shoot apical meristem (SAM), leaves, mature flowers and embryos.

Its subcellular location is the nucleus. Functionally, maybe required to maintain cell division activity in meristematic cells. The sequence is that of Protein MAIN-LIKE 2 from Arabidopsis thaliana (Mouse-ear cress).